Reading from the N-terminus, the 670-residue chain is Meiotic sister-chromatid recombination protein 6, mitochondrial (670 aa).

A mitochondrion-targeting transit peptide spans 1–27 (MLFSRASKIRVSQLMRRLQSTAVGRAA).

It localises to the mitochondrion. In terms of biological role, may be involved in the control of meiotic sister-chromatid recombination. This chain is Meiotic sister-chromatid recombination protein 6, mitochondrial (MSC6), found in Eremothecium gossypii (strain ATCC 10895 / CBS 109.51 / FGSC 9923 / NRRL Y-1056) (Yeast).